A 196-amino-acid chain; its full sequence is Protein GrpE (196 aa).

A disordered region spans residues 1-39 (MSSKEQKTPEGQAPEEIIMDQHEEIEAVEPEASAEQVDP).

It belongs to the GrpE family. As to quaternary structure, homodimer.

The protein localises to the cytoplasm. In terms of biological role, participates actively in the response to hyperosmotic and heat shock by preventing the aggregation of stress-denatured proteins, in association with DnaK and GrpE. It is the nucleotide exchange factor for DnaK and may function as a thermosensor. Unfolded proteins bind initially to DnaJ; upon interaction with the DnaJ-bound protein, DnaK hydrolyzes its bound ATP, resulting in the formation of a stable complex. GrpE releases ADP from DnaK; ATP binding to DnaK triggers the release of the substrate protein, thus completing the reaction cycle. Several rounds of ATP-dependent interactions between DnaJ, DnaK and GrpE are required for fully efficient folding. The sequence is that of Protein GrpE from Escherichia coli (strain SMS-3-5 / SECEC).